The primary structure comprises 218 residues: Lactosylceramide 4-alpha-galactosyltransferase (218 aa).

Residues 57 to 59 carry the DXD motif motif; sequence DTD.

It belongs to the glycosyltransferase 32 family.

The protein localises to the golgi apparatus membrane. It carries out the reaction a beta-D-Gal-(1-&gt;4)-beta-D-Glc-(1&lt;-&gt;1)-Cer(d18:1(4E)) + UDP-alpha-D-galactose = a globoside Gb3Cer (d18:1(4E)) + UDP + H(+). It catalyses the reaction a beta-D-Gal-(1&lt;-&gt;1')-ceramide + UDP-alpha-D-galactose = alpha-D-Gal-(1-&gt;4)-beta-D-Gal-(1&lt;-&gt;1')-Cer + UDP + H(+). It participates in glycolipid biosynthesis. In terms of biological role, catalyzes the transfer of galactose from UDP-alpha-D-galactose to lactosylceramide/beta-D-galactosyl-(1-&gt;4)-beta-D-glucosyl-(1&lt;-&gt;1)-ceramide(d18:1(4E)) to produce globotriaosylceramide/globoside Gb3Cer (d18:1(4E)). Also able to transfer galactose to galactosylceramide/beta-D-Gal-(1&lt;-&gt;1')-Cer. Globoside Gb3Cer is a glycosphingolipid of the globo serie, one of the major types of neutral root structures of glycosphingolipids, that constitute a significant portion of mammalian cell membranes. The sequence is that of Lactosylceramide 4-alpha-galactosyltransferase (A4GALT) from Pongo pygmaeus (Bornean orangutan).